A 146-amino-acid polypeptide reads, in one-letter code: Catabolic 3-dehydroquinase (146 aa).

The active-site Proton acceptor is the Tyr24. Substrate is bound by residues Asn78, His84, and Asp91. His104 functions as the Proton donor in the catalytic mechanism. Substrate contacts are provided by residues 105–106 and Arg115; that span reads IT.

This sequence belongs to the type-II 3-dehydroquinase family. Homododecamer. Adopts a ring-like structure, composed of an arrangement of two hexameric rings stacked on top of one another.

It carries out the reaction 3-dehydroquinate = 3-dehydroshikimate + H2O. It functions in the pathway aromatic compound metabolism; 3,4-dihydroxybenzoate biosynthesis; 3,4-dihydroxybenzoate from 3-dehydroquinate: step 1/2. Its function is as follows. Is involved in the catabolism of quinate. Allows the utilization of quinate as carbon source via the beta-ketoadipate pathway. In Candida albicans (strain SC5314 / ATCC MYA-2876) (Yeast), this protein is Catabolic 3-dehydroquinase.